The sequence spans 127 residues: Mini-ribonuclease 3-like protein (127 aa).

Asp19 is a catalytic residue.

It belongs to the MrnC RNase family.

Functionally, might be a ribonuclease involved in RNA processing. The protein is Mini-ribonuclease 3-like protein (mrnCL) of Ilyobacter polytropus (strain ATCC 51220 / DSM 2926 / LMG 16218 / CuHBu1).